Consider the following 231-residue polypeptide: MSFLCGSASTSNKPIERKIVILGDGACGKTSLLNVFTRGYFPEVYEPTVFENYIHDIFVDSKHITLSLWDTAGQEEFDRLRSLSYSDTQCIMLCFSIDSRDSLENVQNKWVGEITDHCEGVKLVLVALKCDLRNNENESNAITPNNIQQDNSVSNDNGNNINSTSNGKNLISYEEGLAMAKKIGALRYLECSAKLNKGVNEAFTEAARVALTAGPVATEVKSDSGSSCTIM.

23–30 (GDGACGKT) serves as a coordination point for GTP. The Effector region motif lies at 45–53 (YEPTVFENY). GTP-binding positions include 70 to 74 (DTAGQ) and 128 to 131 (LKCD). Residues 139–150 (SNAITPNNIQQD) are compositionally biased toward polar residues. Positions 139–165 (SNAITPNNIQQDNSVSNDNGNNINSTS) are disordered. A compositionally biased stretch (low complexity) spans 151–165 (NSVSNDNGNNINSTS). Cys228 carries the post-translational modification Cysteine methyl ester. Cys228 is lipidated: S-farnesyl cysteine. Residues 229–231 (TIM) constitute a propeptide, removed in mature form.

This sequence belongs to the small GTPase superfamily. Rho family. As to quaternary structure, interacts with TOS7.

It localises to the cell membrane. Activity is positively regulated by the GTPase activating protein (GAP) RGD1. Its function is as follows. Plays an important role in cell growth. Required to keep the uninucleated state. Modulates morphogenesis during bud growth via directing organization of the actin cytoskeleton and the position of the secretory machinery for exocytosis. This chain is GTP-binding protein RHO3, found in Saccharomyces cerevisiae (strain ATCC 204508 / S288c) (Baker's yeast).